The chain runs to 344 residues: tRNA N6-adenosine threonylcarbamoyltransferase (344 aa).

Positions 110 and 114 each coordinate Fe cation. Substrate is bound by residues 132–136 (LVSGG), Asp-166, Gly-179, Asp-183, and Asn-278. A Fe cation-binding site is contributed by Asp-306.

The protein belongs to the KAE1 / TsaD family. Fe(2+) is required as a cofactor.

The protein localises to the cytoplasm. It catalyses the reaction L-threonylcarbamoyladenylate + adenosine(37) in tRNA = N(6)-L-threonylcarbamoyladenosine(37) in tRNA + AMP + H(+). Its function is as follows. Required for the formation of a threonylcarbamoyl group on adenosine at position 37 (t(6)A37) in tRNAs that read codons beginning with adenine. Is involved in the transfer of the threonylcarbamoyl moiety of threonylcarbamoyl-AMP (TC-AMP) to the N6 group of A37, together with TsaE and TsaB. TsaD likely plays a direct catalytic role in this reaction. The polypeptide is tRNA N6-adenosine threonylcarbamoyltransferase (Nocardia farcinica (strain IFM 10152)).